Reading from the N-terminus, the 705-residue chain is Fatty acid oxidation complex subunit alpha (705 aa).

Residues 1-188 (MGKTFNLTRR…KMGLVNDVVP (188 aa)) are enoyl-CoA hydratase. The interval 308-705 (RKVKKAVILG…AMAAEKARFF (398 aa)) is 3-hydroxyacyl-CoA dehydrogenase.

It in the N-terminal section; belongs to the enoyl-CoA hydratase/isomerase family. In the central section; belongs to the 3-hydroxyacyl-CoA dehydrogenase family. Heterotetramer of two alpha chains (FadJ) and two beta chains (FadI).

The protein localises to the cytoplasm. The enzyme catalyses a (3S)-3-hydroxyacyl-CoA = a (2E)-enoyl-CoA + H2O. It catalyses the reaction a 4-saturated-(3S)-3-hydroxyacyl-CoA = a (3E)-enoyl-CoA + H2O. It carries out the reaction a (3S)-3-hydroxyacyl-CoA + NAD(+) = a 3-oxoacyl-CoA + NADH + H(+). The catalysed reaction is (3S)-3-hydroxybutanoyl-CoA = (3R)-3-hydroxybutanoyl-CoA. It functions in the pathway lipid metabolism; fatty acid beta-oxidation. In terms of biological role, catalyzes the formation of a hydroxyacyl-CoA by addition of water on enoyl-CoA. Also exhibits 3-hydroxyacyl-CoA epimerase and 3-hydroxyacyl-CoA dehydrogenase activities. This chain is Fatty acid oxidation complex subunit alpha, found in Shewanella oneidensis (strain ATCC 700550 / JCM 31522 / CIP 106686 / LMG 19005 / NCIMB 14063 / MR-1).